We begin with the raw amino-acid sequence, 676 residues long: Envelope glycoprotein (676 aa).

The first 32 residues, 1 to 32 (MEGLSLLQLPRDKFRKSSFFVWVIILFQKAFS), serve as a signal peptide directing secretion. The Extracellular segment spans residues 33–650 (MPLGVVTNST…DDNWWTGWRQ (618 aa)). A glycan (N-linked (GlcNAc...) asparagine; by host) is linked at Asn-40. Disulfide bonds link Cys-53/Cys-609, Cys-108/Cys-135, Cys-121/Cys-147, Cys-511/Cys-556, and Cys-601/Cys-608. The segment at 54 to 201 (KDHLASTDQL…TFLQSPPIRE (148 aa)) is receptor-binding. N-linked (GlcNAc...) asparagine; by host glycosylation is found at Asn-204, Asn-208, Asn-238, Asn-257, Asn-268, Asn-296, and Asn-314. Positions 305–485 (ELSFETLSLN…STSNGLITST (181 aa)) are mucin-like region. Residues 312-351 (SLNETEDDDATSSRTTKGRISDRATRKYSDLVPKDSPGMV) form a disordered region. The segment covering 330–344 (RISDRATRKYSDLVP) has biased composition (basic and acidic residues). Asn-366 carries N-linked (GlcNAc...) asparagine; by host glycosylation. The interval 406-458 (SSSQILSSSPTMAPSPETQTSTTYTPKLPVMTTEEPTTPPRNSPGSTTEAPTL) is disordered. Composition is skewed to polar residues over residues 415-430 (PTMA…TTYT) and 448-458 (SPGSTTEAPTL). Asn-463 is a glycosylation site (N-linked (GlcNAc...) asparagine; by host). Positions 524-539 (HNAAGIAWIPYFGPGA) are fusion peptide. Residues 554 to 595 (LVCGLRQLANETTQALQLFLRATTELRTYTILNRKAIDFLLR) are a coiled coil. Asn-563 carries N-linked (GlcNAc...) asparagine; by host glycosylation. Positions 615 to 634 (WTKNITDKINQIIHDFIDNP) form a coiled coil. Asn-618 is a glycosylation site (N-linked (GlcNAc...) asparagine; by host). A helical membrane pass occupies residues 651–671 (WIPAGIGITGIIIAIIALLCV). S-palmitoyl cysteine; by host attachment occurs at residues Cys-670 and Cys-672. The Cytoplasmic portion of the chain corresponds to 672–676 (CKLLC).

The protein belongs to the filoviruses glycoprotein family. Homotrimer; each monomer consists of a GP1 and a GP2 subunit linked by disulfide bonds. The resulting peplomers (GP1,2) protrude from the virus surface as spikes. Interacts with host integrin alpha-V/ITGAV. Interacts with host CLEC10A. Binds also to host CD209 and CLEC4M/DC-SIGN(R). Interacts with host FOLR1. Interacts with BST2; this interaction inhibits the antiviral effect of BST2 and this allows viral release from infected cells. Interacts with host FCN1; this interaction enhances viral entry. Interacts with host TLR4; this interaction induces cell death in T-lymphocytes or proinflammatory cytokines and SOCS1 production in monocytes. As to quaternary structure, interacts with host entry receptor NPC1. In terms of assembly, GP1 and GP2delta are part of GP1,2delta soluble complexes released by ectodomain shedding. The signal peptide region modulates GP's high mannose glycosylation, thereby determining the efficiency of the interactions with DC-SIGN(R). Post-translationally, N-glycosylated. In terms of processing, O-glycosylated in the mucin-like region. Palmitoylation of GP2 is not required for its function. Post-translationally, specific enzymatic cleavages in vivo yield mature proteins. The precursor is processed into GP1 and GP2 by host cell furin in the trans Golgi, and maybe by other host proteases, to yield the mature GP1 and GP2 proteins. The cleavage site corresponds to the furin optimal cleavage sequence [KR]-X-[KR]-R. This cleavage does not seem to be required for function. After the internalization of the virus into cell endosomes, GP1 C-terminus is removed by the endosomal proteases cathepsin B, cathepsin L, or both, leaving a 19-kDa N-terminal fragment which is further digested by cathepsin B. Proteolytic processing of GP1,2 by host ADAM17 can remove the transmembrane anchor of GP2 and leads to shedding of complexes consisting in GP1 and truncated GP2 (GP1,2delta).

Its subcellular location is the virion membrane. It is found in the host cell membrane. The protein resides in the secreted. In terms of biological role, trimeric GP1,2 complexes form the virion surface spikes and mediate the viral entry processes, with GP1 acting as the receptor-binding subunit and GP2 as the membrane fusion subunit. At later times of infection, down-regulates the expression of various host cell surface molecules that are essential for immune surveillance and cell adhesion. Down-modulates several integrins including ITGA1, ITGA2, ITGA3, ITGA4, ITGA5, ITGA6, ITGAV and ITGB1. This decrease in cell adhesion molecules may lead to cell detachment, contributing to the disruption of blood vessel integrity and hemorrhages developed during infection (cytotoxicity). Interacts with host TLR4 and thereby stimulates the differentiation and activation of monocytes leading to bystander death of T-lymphocytes. Down-regulates as well the function of host natural killer cells. Counteracts the antiviral effect of host BST2/tetherin that restricts release of progeny virions from infected cells. However, cooperates with VP40 and host BST2 to activate canonical NF-kappa-B pathway in a manner dependent on neddylation. Functions as a decoy for anti-GP1,2 antibodies thereby contributing to viral immune evasion. Interacts and activates host macrophages and dendritic cells inducing up-regulation of cytokine transcription. This effect is mediated throught activation of host TLR4. Functionally, responsible for binding to the receptor(s) on target cells. Interacts with CD209/DC-SIGN and CLEC4M/DC-SIGNR which act as cofactors for virus entry into dendritic cells (DCs) and endothelial cells. Binding to the macrophage specific lectin CLEC10A also seems to enhance virus infectivity. Interaction with FOLR1/folate receptor alpha may be a cofactor for virus entry in some cell types, although results are contradictory. Members of the Tyro3 receptor tyrosine kinase family also seem to be cell entry factors in filovirus infection. Once attached, the virions are internalized through clathrin-dependent endocytosis and/or macropinocytosis. After internalization of the virus into the endosomes of the host cell, proteolysis of GP1 by two cysteine proteases, CTSB/cathepsin B and CTSL/cathepsin L removes the glycan cap and allows GP1 binding to the host entry receptor NPC1. NPC1-binding, Ca(2+) and acidic pH induce a conformational change of GP2, which unmasks its fusion peptide and permit membranes fusion. Its function is as follows. Acts as a class I viral fusion protein. Under the current model, the protein has at least 3 conformational states: pre-fusion native state, pre-hairpin intermediate state, and post-fusion hairpin state. During viral and target cell membrane fusion, the coiled coil regions (heptad repeats) assume a trimer-of-hairpins structure, positioning the fusion peptide in close proximity to the C-terminal region of the ectodomain. The formation of this structure appears to drive apposition and subsequent fusion of viral and target cell membranes. Responsible for penetration of the virus into the cell cytoplasm by mediating the fusion of the membrane of the endocytosed virus particle with the endosomal membrane. Low pH in endosomes induces an irreversible conformational change in GP2, releasing the fusion hydrophobic peptide. This is Envelope glycoprotein (GP) from Sudan ebolavirus (strain Maleo-79) (SEBOV).